A 318-amino-acid polypeptide reads, in one-letter code: Petal death protein (318 aa).

A propeptide spans 1-3 (MAP) (removed in mature form). The tract at residues 1-24 (MAPPNGTTNGETEVATQGSYTAVS) is disordered. Residues D107, D109, and K142 each contribute to the Mg(2+) site.

This sequence belongs to the isocitrate lyase/PEP mutase superfamily. Homodimer and homotetramer formed by a dimer of homodimer. Mg(2+) is required as a cofactor. It depends on Mn(2+) as a cofactor. The cofactor is Fe(2+). Co(2+) serves as cofactor. In terms of tissue distribution, accumulates in senescing flower petals.

The enzyme catalyses oxaloacetate + H2O = oxalate + acetate + H(+). In terms of biological role, catalyzes cleavage of the C(2)-C(3) bond in oxaloacetate and in (2R)-alkyl malate derivatives to form oxalate and acetate, and alkyl carboxylates and R-ketocarboxylates, respectively. The polypeptide is Petal death protein (Dianthus caryophyllus (Carnation)).